A 262-amino-acid polypeptide reads, in one-letter code: Carbonic anhydrase 13 (262 aa).

One can recognise an Alpha-carbonic anhydrase domain in the interval leucine 4–phenylalanine 261. The active-site Proton donor/acceptor is the histidine 65. Zn(2+) contacts are provided by histidine 95, histidine 97, and histidine 120. Residue threonine 200–valine 201 participates in substrate binding.

The protein belongs to the alpha-carbonic anhydrase family. Zn(2+) is required as a cofactor. In terms of tissue distribution, expressed in thymus, small intestine, spleen, prostate, ovary, colon and testis.

The enzyme catalyses hydrogencarbonate + H(+) = CO2 + H2O. Inhibited by acetazolamide. Reversible hydration of carbon dioxide. The protein is Carbonic anhydrase 13 (CA13) of Homo sapiens (Human).